We begin with the raw amino-acid sequence, 403 residues long: Tetratricopeptide repeat protein 19, mitochondrial (403 aa).

Residues 1 to 67 (MALRSYCRQL…WHRRSWHRCA (67 aa)) constitute a mitochondrion transit peptide. 3 TPR repeats span residues 154-187 (IYTY…MLSG), 297-330 (LVLM…GQAA), and 336-369 (HVLL…AHTA).

Belongs to the TTC19 family. In terms of assembly, binds to the mature mitochondrial complex III dimer, after the incorporation of the Rieske protein (UQCRFS1). Interacts with UQCRC1 and UQCRFS1. Interacts with ZFYVE26 and CHMP4B.

The protein resides in the mitochondrion inner membrane. Functionally, required for the preservation of the structural and functional integrity of mitochondrial respiratory complex III by allowing the physiological turnover of the Rieske protein UQCRFS1. Involved in the clearance of UQCRFS1 N-terminal fragments, which are produced upon incorporation into the complex III and whose presence is detrimental for its catalytic activity. This Danio rerio (Zebrafish) protein is Tetratricopeptide repeat protein 19, mitochondrial (ttc19).